We begin with the raw amino-acid sequence, 208 residues long: Holliday junction branch migration complex subunit RuvA (208 aa).

A domain I region spans residues 1-64; sequence MIGKLKGIVD…EDMIRLYGFR (64 aa). The segment at 65–143 is domain II; sequence SDAEREWFRL…AFAPVDPALV (79 aa). Residues 144–152 are flexible linker; it reads ALTGAVEDR. The domain III stretch occupies residues 153-208; it reads TAPQPVADAISALVNLGYPQVQASAAIAAALKGLGDGAETVEAKTLIRLGLRELAR.

This sequence belongs to the RuvA family. Homotetramer. Forms an RuvA(8)-RuvB(12)-Holliday junction (HJ) complex. HJ DNA is sandwiched between 2 RuvA tetramers; dsDNA enters through RuvA and exits via RuvB. An RuvB hexamer assembles on each DNA strand where it exits the tetramer. Each RuvB hexamer is contacted by two RuvA subunits (via domain III) on 2 adjacent RuvB subunits; this complex drives branch migration. In the full resolvosome a probable DNA-RuvA(4)-RuvB(12)-RuvC(2) complex forms which resolves the HJ.

Its subcellular location is the cytoplasm. Its function is as follows. The RuvA-RuvB-RuvC complex processes Holliday junction (HJ) DNA during genetic recombination and DNA repair, while the RuvA-RuvB complex plays an important role in the rescue of blocked DNA replication forks via replication fork reversal (RFR). RuvA specifically binds to HJ cruciform DNA, conferring on it an open structure. The RuvB hexamer acts as an ATP-dependent pump, pulling dsDNA into and through the RuvAB complex. HJ branch migration allows RuvC to scan DNA until it finds its consensus sequence, where it cleaves and resolves the cruciform DNA. The protein is Holliday junction branch migration complex subunit RuvA of Methylorubrum populi (strain ATCC BAA-705 / NCIMB 13946 / BJ001) (Methylobacterium populi).